Reading from the N-terminus, the 513-residue chain is MSWPLIGAYALLAFVAIIALNVTYQFLFRLLNKTRPPLVFHWIPFIGSTIHYGMDPYGFFFSCREKYGDIFTFILLGRPTTVYLGTQGNEFILNGKLKDVNAEEVYSPLTTPVFGSDVVYDCPNSKLIEQKKFIKFGLSQTALEAHVPLIEKEVEDYLAMSPNFHGTSGEVDITAAMAEITIFTAGSALQGEEVRSKLTTEFAVLYHDLDKGFTPINFMLPWAPLPHNKKRDAAHARMRAIYIDIINKRRNAGDNVPEKLDMIGNLMQCTYKNGQPLPDKEIAHIMITLLMAGQHSSSSISSWIMLRLASQPAVVEELYQEQLANLERTGPNNSLAPLQYKDFDNLPLHQNVIRETLRLNSSIHSLMRKVKNPLPVPGTPYVIPTSHVLLSAPGVTALSDEYFPNAMAWDPHRWETQAPKENDKDDIVDYGYGAISKGTSSPYLPFGAGRHRCIGEKFAYLNLAVIVATMVRHLRFSNLDGQTGVPATDYSSLFSGPMKPARIRWERRAAKSG.

A helical membrane pass occupies residues 3-23 (WPLIGAYALLAFVAIIALNVT). A heme-binding site is contributed by Cys-453.

This sequence belongs to the cytochrome P450 family. Heme is required as a cofactor.

The protein localises to the membrane. It carries out the reaction a 14alpha-methyl steroid + 3 reduced [NADPH--hemoprotein reductase] + 3 O2 = a Delta(14) steroid + formate + 3 oxidized [NADPH--hemoprotein reductase] + 4 H2O + 4 H(+). It catalyses the reaction a 14alpha-methyl steroid + reduced [NADPH--hemoprotein reductase] + O2 = a 14alpha-hydroxymethyl steroid + oxidized [NADPH--hemoprotein reductase] + H2O + H(+). The enzyme catalyses a 14alpha-hydroxymethyl steroid + reduced [NADPH--hemoprotein reductase] + O2 = a 14alpha-formyl steroid + oxidized [NADPH--hemoprotein reductase] + 2 H2O + H(+). The catalysed reaction is a 14alpha-formyl steroid + reduced [NADPH--hemoprotein reductase] + O2 = a Delta(14) steroid + formate + oxidized [NADPH--hemoprotein reductase] + H2O + 2 H(+). It carries out the reaction lanosterol + 3 reduced [NADPH--hemoprotein reductase] + 3 O2 = 4,4-dimethyl-5alpha-cholesta-8,14,24-trien-3beta-ol + formate + 3 oxidized [NADPH--hemoprotein reductase] + 4 H2O + 4 H(+). It catalyses the reaction lanosterol + reduced [NADPH--hemoprotein reductase] + O2 = 32-hydroxylanosterol + oxidized [NADPH--hemoprotein reductase] + H2O + H(+). The enzyme catalyses 32-hydroxylanosterol + reduced [NADPH--hemoprotein reductase] + O2 = 32-oxolanosterol + oxidized [NADPH--hemoprotein reductase] + 2 H2O + H(+). The catalysed reaction is 32-oxolanosterol + reduced [NADPH--hemoprotein reductase] + O2 = 4,4-dimethyl-5alpha-cholesta-8,14,24-trien-3beta-ol + formate + oxidized [NADPH--hemoprotein reductase] + H2O + 2 H(+). It carries out the reaction eburicol + 3 reduced [NADPH--hemoprotein reductase] + 3 O2 = 14-demethyleburicol + formate + 3 oxidized [NADPH--hemoprotein reductase] + 4 H2O + 4 H(+). It catalyses the reaction eburicol + reduced [NADPH--hemoprotein reductase] + O2 = 32-hydroxyeburicol + oxidized [NADPH--hemoprotein reductase] + H2O + H(+). The enzyme catalyses 32-hydroxyeburicol + reduced [NADPH--hemoprotein reductase] + O2 = 32-oxoeburicol + oxidized [NADPH--hemoprotein reductase] + 2 H2O + H(+). The catalysed reaction is 32-oxoeburicol + reduced [NADPH--hemoprotein reductase] + O2 = 14-demethyleburicol + formate + oxidized [NADPH--hemoprotein reductase] + H2O + 2 H(+). It functions in the pathway steroid biosynthesis; sterol biosynthesis. Sterol 14-alpha demethylase; part of the gene cluster that mediates the biosynthesis of the tetrahydropyranyl antifungal agent restricticin that acts as an inhibitor of CYP51 and blocks the ergosterol biosynthesis. Sterol 14-alpha-demethylase plays a critical role in the biosynthesis of ergosterol, the major sterol component in fungal membranes that participates in a variety of functions. Rtsn2 acts as a self-resistant CYP51 that contains mutations found in CYP51s isolated from azole resistance strains and that is not inhibited by the final product of the cluster, restricticin. The protein is Sterol 14-alpha demethylase rstn2 of Aspergillus nomiae NRRL (strain ATCC 15546 / NRRL 13137 / CBS 260.88 / M93).